The sequence spans 380 residues: Outer membrane protein assembly factor BamB (380 aa).

The first 18 residues, 1–18 (MVQWKHAALLALALAVVG), serve as a signal peptide directing secretion. Residue C19 is the site of N-palmitoyl cysteine attachment. Residue C19 is the site of S-diacylglycerol cysteine attachment.

This sequence belongs to the BamB family. In terms of assembly, part of the Bam complex.

Its subcellular location is the cell outer membrane. Its function is as follows. Part of the outer membrane protein assembly complex, which is involved in assembly and insertion of beta-barrel proteins into the outer membrane. The polypeptide is Outer membrane protein assembly factor BamB (Pseudomonas aeruginosa (strain ATCC 15692 / DSM 22644 / CIP 104116 / JCM 14847 / LMG 12228 / 1C / PRS 101 / PAO1)).